The chain runs to 426 residues: Tyrosine--tRNA ligase (426 aa).

Tyr-38 contributes to the L-tyrosine binding site. Residues 43–52 (PTADSLHIGS) carry the 'HIGH' region motif. Positions 176 and 180 each coordinate L-tyrosine. The 'KMSKS' region signature appears at 236–240 (KFGKT). Residue Lys-239 coordinates ATP. The S4 RNA-binding domain maps to 359–426 (QTIVEVLTQS…KKLFNLYIWK (68 aa)).

Belongs to the class-I aminoacyl-tRNA synthetase family. TyrS type 1 subfamily. Homodimer.

It is found in the cytoplasm. It catalyses the reaction tRNA(Tyr) + L-tyrosine + ATP = L-tyrosyl-tRNA(Tyr) + AMP + diphosphate + H(+). Catalyzes the attachment of tyrosine to tRNA(Tyr) in a two-step reaction: tyrosine is first activated by ATP to form Tyr-AMP and then transferred to the acceptor end of tRNA(Tyr). The sequence is that of Tyrosine--tRNA ligase from Aliivibrio fischeri (strain ATCC 700601 / ES114) (Vibrio fischeri).